Consider the following 124-residue polypeptide: Competence protein ComGG (124 aa).

The signal sequence occupies residues 1–28; that stretch reads MYRTRGFIYPAVLFVSALVLLIVNFVAA.

In terms of assembly, the transformation pili are flexible filaments, consisting mainly of the major pilin ComGC and smaller amounts of the minor pilins, including at least ComGD, ComGF and ComGG. Interacts with ComGC; the interaction is probably direct. Interacts with ComGD. Interacts with ComGF. May act as a link between ComGC, ComGD and ComGF. Homodimer; disulfide-linked. A minor fraction of ComGG is found as a disulfide-bonded homodimer. Partial processing of ComGG in competent cells requires ComC.

It is found in the cell membrane. It localises to the secreted. Functionally, required for formation of the type IV-like pilus (T4P) that plays a role in transformation. Transformation pili are dynamically extended and retracted, perhaps thereby promoting DNA uptake and transformation. Required for transformation and DNA binding. This is Competence protein ComGG (comGG) from Bacillus subtilis (strain 168).